The sequence spans 299 residues: N-acetylmuramic acid 6-phosphate etherase (299 aa).

The region spanning 54–217 is the SIS domain; it reads TIAQYKKGGR…STITMVGVGK (164 aa). Catalysis depends on Glu-82, which acts as the Proton donor. Glu-113 is an active-site residue.

It belongs to the GCKR-like family. MurNAc-6-P etherase subfamily. Homodimer.

It catalyses the reaction N-acetyl-D-muramate 6-phosphate + H2O = N-acetyl-D-glucosamine 6-phosphate + (R)-lactate. It functions in the pathway amino-sugar metabolism; N-acetylmuramate degradation. In terms of biological role, specifically catalyzes the cleavage of the D-lactyl ether substituent of MurNAc 6-phosphate, producing GlcNAc 6-phosphate and D-lactate. This is N-acetylmuramic acid 6-phosphate etherase from Staphylococcus aureus (strain USA300).